We begin with the raw amino-acid sequence, 122 residues long: Large ribosomal subunit protein uL14 (122 aa).

The protein belongs to the universal ribosomal protein uL14 family. Part of the 50S ribosomal subunit. Forms a cluster with proteins L3 and L19. In the 70S ribosome, L14 and L19 interact and together make contacts with the 16S rRNA in bridges B5 and B8.

Binds to 23S rRNA. Forms part of two intersubunit bridges in the 70S ribosome. This chain is Large ribosomal subunit protein uL14, found in Synechococcus sp. (strain JA-2-3B'a(2-13)) (Cyanobacteria bacterium Yellowstone B-Prime).